The following is a 71-amino-acid chain: Large ribosomal subunit protein uL29 (71 aa).

The tract at residues 1–20 (MKARELQELRQGSSPQDLQE) is disordered.

The protein belongs to the universal ribosomal protein uL29 family.

This Clostridium kluyveri (strain ATCC 8527 / DSM 555 / NBRC 12016 / NCIMB 10680 / K1) protein is Large ribosomal subunit protein uL29.